Consider the following 92-residue polypeptide: UPF0250 protein VV0902 (92 aa).

This sequence belongs to the UPF0250 family.

This Vibrio vulnificus (strain YJ016) protein is UPF0250 protein VV0902.